The following is a 117-amino-acid chain: Large ribosomal subunit protein bL20 (117 aa).

This sequence belongs to the bacterial ribosomal protein bL20 family.

Its function is as follows. Binds directly to 23S ribosomal RNA and is necessary for the in vitro assembly process of the 50S ribosomal subunit. It is not involved in the protein synthesizing functions of that subunit. The protein is Large ribosomal subunit protein bL20 of Glaesserella parasuis serovar 5 (strain SH0165) (Haemophilus parasuis).